Here is a 131-residue protein sequence, read N- to C-terminus: Small ribosomal subunit protein uS11 (131 aa).

It belongs to the universal ribosomal protein uS11 family. As to quaternary structure, part of the 30S ribosomal subunit. Interacts with proteins S7 and S18. Binds to IF-3.

Located on the platform of the 30S subunit, it bridges several disparate RNA helices of the 16S rRNA. Forms part of the Shine-Dalgarno cleft in the 70S ribosome. The sequence is that of Small ribosomal subunit protein uS11 from Clostridium acetobutylicum (strain ATCC 824 / DSM 792 / JCM 1419 / IAM 19013 / LMG 5710 / NBRC 13948 / NRRL B-527 / VKM B-1787 / 2291 / W).